The chain runs to 301 residues: Mitochondrial ornithine transporter 1 (301 aa).

Helical transmembrane passes span 5–25 (PAIQ…ACVL), 68–88 (SPAL…YGFC), 110–130 (AAAG…TELV), 168–188 (GFYH…FFFF), 207–227 (LGPI…WLAV), and 237–257 (IQVL…LSIV). Solcar repeat units lie at residues 7–91 (IQAA…CQQV), 104–197 (LSDL…SRSF), and 207–293 (LGPI…SRKL).

This sequence belongs to the mitochondrial carrier (TC 2.A.29) family. Expressed in the liver (at protein level).

It localises to the mitochondrion inner membrane. It is found in the mitochondrion membrane. It carries out the reaction L-citrulline(in) + L-ornithine(out) + H(+)(in) = L-citrulline(out) + L-ornithine(in) + H(+)(out). The catalysed reaction is L-ornithine(in) + L-arginine(out) = L-ornithine(out) + L-arginine(in). It catalyses the reaction L-ornithine(out) + L-lysine(in) = L-ornithine(in) + L-lysine(out). The enzyme catalyses L-ornithine(out) + H(+)(in) = L-ornithine(in) + H(+)(out). It carries out the reaction L-lysine(out) + H(+)(in) = L-lysine(in) + H(+)(out). With respect to regulation, inhibited by pyridoxal 5'-phosphate as well as by mercurials (mersalyl, p-chloromercuribenzene sulfonate, and mercuric chloride), N-ethylmaleimide and spermine. Functionally, mitochondrial ornithine-citrulline antiporter. Catalyzes the exchange between cytosolic ornithine and mitochondrial citrulline plus an H(+), the proton compensates the positive charge of ornithine thus leading to an electroneutral transport. Plays a crucial role in the urea cycle, by connecting the cytosolic and the intramitochondrial reactions of the urea cycle. Lysine and arginine are also transported by the antiport mechanism. In addition, catalyzes an electroneutral exchange of ornithine or lysine for H(+), a reaction driven by the pH gradient across the inner membrane. In Rattus norvegicus (Rat), this protein is Mitochondrial ornithine transporter 1 (Slc25a15).